A 316-amino-acid chain; its full sequence is Transaldolase (316 aa).

The active-site Schiff-base intermediate with substrate is Lys132.

The protein belongs to the transaldolase family. Type 1 subfamily. As to quaternary structure, homodimer.

It is found in the cytoplasm. It catalyses the reaction D-sedoheptulose 7-phosphate + D-glyceraldehyde 3-phosphate = D-erythrose 4-phosphate + beta-D-fructose 6-phosphate. It participates in carbohydrate degradation; pentose phosphate pathway; D-glyceraldehyde 3-phosphate and beta-D-fructose 6-phosphate from D-ribose 5-phosphate and D-xylulose 5-phosphate (non-oxidative stage): step 2/3. Transaldolase is important for the balance of metabolites in the pentose-phosphate pathway. In Vibrio vulnificus (strain YJ016), this protein is Transaldolase.